The sequence spans 405 residues: Diaminopimelate decarboxylase (405 aa).

An N6-(pyridoxal phosphate)lysine modification is found at lysine 46. Pyridoxal 5'-phosphate is bound by residues glycine 225 and glutamate 259 to arginine 262. Residues arginine 262, arginine 298, and tyrosine 302 each contribute to the substrate site. Residue cysteine 329 is the Proton donor of the active site. Residues glutamate 330 and tyrosine 358 each contribute to the substrate site. Pyridoxal 5'-phosphate is bound at residue tyrosine 358.

The protein belongs to the Orn/Lys/Arg decarboxylase class-II family. LysA subfamily. Homodimer. Pyridoxal 5'-phosphate is required as a cofactor.

The catalysed reaction is meso-2,6-diaminopimelate + H(+) = L-lysine + CO2. It functions in the pathway amino-acid biosynthesis; L-lysine biosynthesis via DAP pathway; L-lysine from DL-2,6-diaminopimelate: step 1/1. Functionally, specifically catalyzes the decarboxylation of meso-diaminopimelate (meso-DAP) to L-lysine. This chain is Diaminopimelate decarboxylase, found in Helicobacter pylori (strain ATCC 700392 / 26695) (Campylobacter pylori).